We begin with the raw amino-acid sequence, 158 residues long: MGVEGILEKGFVTTTADKLINYTRTGSLWPMTFGLACCAVEMMHAGAARYDLDRFGVVFRPSPRQSDLMIVAGTLCNKMAPALRKVYDQMAEPRWVISMGSCANGGGYYHYSYSVVRGCDRIVPVDVYVPGCPPTAEALLYGIIQLQNKIKRTNTIAR.

The [4Fe-4S] cluster site is built by cysteine 37, cysteine 38, cysteine 102, and cysteine 132.

This sequence belongs to the complex I 20 kDa subunit family. NDH-1 is composed of 14 different subunits. Subunits NuoB, C, D, E, F, and G constitute the peripheral sector of the complex. Requires [4Fe-4S] cluster as cofactor.

The protein resides in the cell inner membrane. The enzyme catalyses a quinone + NADH + 5 H(+)(in) = a quinol + NAD(+) + 4 H(+)(out). Its function is as follows. NDH-1 shuttles electrons from NADH, via FMN and iron-sulfur (Fe-S) centers, to quinones in the respiratory chain. Couples the redox reaction to proton translocation (for every two electrons transferred, four hydrogen ions are translocated across the cytoplasmic membrane), and thus conserves the redox energy in a proton gradient. This chain is NADH-quinone oxidoreductase subunit B 1, found in Chromobacterium violaceum (strain ATCC 12472 / DSM 30191 / JCM 1249 / CCUG 213 / NBRC 12614 / NCIMB 9131 / NCTC 9757 / MK).